The primary structure comprises 185 residues: Ribosome-recycling factor (185 aa).

This sequence belongs to the RRF family.

It localises to the cytoplasm. Its function is as follows. Responsible for the release of ribosomes from messenger RNA at the termination of protein biosynthesis. May increase the efficiency of translation by recycling ribosomes from one round of translation to another. This is Ribosome-recycling factor from Streptococcus pneumoniae serotype 2 (strain D39 / NCTC 7466).